The primary structure comprises 145 residues: Small ribosomal subunit protein eS19 (145 aa).

The protein belongs to the eukaryotic ribosomal protein eS19 family. Part of the 30S ribosomal subunit.

May be involved in maturation of the 30S ribosomal subunit. This Methanothermobacter thermautotrophicus (strain ATCC 29096 / DSM 1053 / JCM 10044 / NBRC 100330 / Delta H) (Methanobacterium thermoautotrophicum) protein is Small ribosomal subunit protein eS19.